The primary structure comprises 90 residues: Small ribosomal subunit protein bS16 (90 aa).

This sequence belongs to the bacterial ribosomal protein bS16 family.

This chain is Small ribosomal subunit protein bS16, found in Streptococcus agalactiae serotype III (strain NEM316).